A 279-amino-acid chain; its full sequence is Hydroxyethylthiazole kinase (279 aa).

Substrate is bound at residue Met-58. Residues Lys-134 and Thr-180 each contribute to the ATP site. Residue Gly-207 coordinates substrate.

It belongs to the Thz kinase family. Mg(2+) is required as a cofactor.

The catalysed reaction is 5-(2-hydroxyethyl)-4-methylthiazole + ATP = 4-methyl-5-(2-phosphooxyethyl)-thiazole + ADP + H(+). It functions in the pathway cofactor biosynthesis; thiamine diphosphate biosynthesis; 4-methyl-5-(2-phosphoethyl)-thiazole from 5-(2-hydroxyethyl)-4-methylthiazole: step 1/1. Catalyzes the phosphorylation of the hydroxyl group of 4-methyl-5-beta-hydroxyethylthiazole (THZ). This is Hydroxyethylthiazole kinase from Methanoculleus marisnigri (strain ATCC 35101 / DSM 1498 / JR1).